Consider the following 363-residue polypeptide: Ribosomal RNA large subunit methyltransferase M (363 aa).

Residues Ser-190, Cys-223 to Gly-226, Asp-242, Asp-262, and Asp-279 each bind S-adenosyl-L-methionine. The active-site Proton acceptor is the Lys-308.

This sequence belongs to the class I-like SAM-binding methyltransferase superfamily. RNA methyltransferase RlmE family. RlmM subfamily. In terms of assembly, monomer.

The protein localises to the cytoplasm. It catalyses the reaction cytidine(2498) in 23S rRNA + S-adenosyl-L-methionine = 2'-O-methylcytidine(2498) in 23S rRNA + S-adenosyl-L-homocysteine + H(+). Catalyzes the 2'-O-methylation at nucleotide C2498 in 23S rRNA. In Vibrio vulnificus (strain CMCP6), this protein is Ribosomal RNA large subunit methyltransferase M.